A 271-amino-acid polypeptide reads, in one-letter code: Phosphatidylglycerol--prolipoprotein diacylglyceryl transferase (271 aa).

7 helical membrane-spanning segments follow: residues Ile-18–Leu-38, Tyr-60–Tyr-80, Phe-103–Tyr-123, Leu-137–Leu-157, Pro-181–Ile-201, Gly-209–Phe-229, and Ile-236–Leu-256. Arg-152 contributes to the a 1,2-diacyl-sn-glycero-3-phospho-(1'-sn-glycerol) binding site.

The protein belongs to the Lgt family.

It localises to the cell inner membrane. It catalyses the reaction L-cysteinyl-[prolipoprotein] + a 1,2-diacyl-sn-glycero-3-phospho-(1'-sn-glycerol) = an S-1,2-diacyl-sn-glyceryl-L-cysteinyl-[prolipoprotein] + sn-glycerol 1-phosphate + H(+). It functions in the pathway protein modification; lipoprotein biosynthesis (diacylglyceryl transfer). Functionally, catalyzes the transfer of the diacylglyceryl group from phosphatidylglycerol to the sulfhydryl group of the N-terminal cysteine of a prolipoprotein, the first step in the formation of mature lipoproteins. The polypeptide is Phosphatidylglycerol--prolipoprotein diacylglyceryl transferase (Campylobacter lari (strain RM2100 / D67 / ATCC BAA-1060)).